The following is a 32-amino-acid chain: Delta-actitoxin-Eqd1a (32 aa).

It belongs to the sea anemone short toxin (type III) family. Post-translationally, contains 4 disulfide bonds.

The protein localises to the secreted. It is found in the nematocyst. Its function is as follows. Binds specifically to sodium channels (Nav) of the axonal membrane of crayfish and prolongs the falling phase of the action potential. It also increases the maximum rates of rise of both action potential and resting potential. Is only active on crustaceans. This is Delta-actitoxin-Eqd1a from Entacmaea quadricolor (Bubble-tip anemone).